We begin with the raw amino-acid sequence, 166 residues long: Protein TIFY 11e (166 aa).

The Tify domain maps to 65–100 (ASSAAAQMTIFYGGRVLVLDECPADRAAALLRLAAS). The short motif at 123 to 148 (PVARKASLQRFMEKRKGRLAARGQPY) is the Jas element. The Nuclear localization signal signature appears at 125–132 (ARKASLQR).

The protein belongs to the TIFY/JAZ family. In terms of processing, ubiquitinated. Targeted for degradation by the SCF(COI1) E3 ubiquitin ligase-proteasome pathway during jasmonate signaling.

The protein localises to the nucleus. Functionally, repressor of jasmonate responses. The chain is Protein TIFY 11e from Oryza sativa subsp. japonica (Rice).